The following is a 331-amino-acid chain: Putative peptidyl-prolyl cis-trans isomerase RF_0616 (331 aa).

Residues 28–50 (NPTTIEQTASNNSSTDENQTSIN) form a disordered region. The PPIase FKBP-type domain occupies 128-226 (GHVVTVFYQI…NNEVKIYDDE (99 aa)).

It catalyses the reaction [protein]-peptidylproline (omega=180) = [protein]-peptidylproline (omega=0). The chain is Putative peptidyl-prolyl cis-trans isomerase RF_0616 from Rickettsia felis (strain ATCC VR-1525 / URRWXCal2) (Rickettsia azadi).